The sequence spans 136 residues: Large ribosomal subunit protein bL21 (136 aa).

A compositionally biased stretch (low complexity) spans 1 to 21; sequence MSETPSKAKASKPAESKAQAS. The segment at 1-25 is disordered; sequence MSETPSKAKASKPAESKAQASDSSG.

It belongs to the bacterial ribosomal protein bL21 family. In terms of assembly, part of the 50S ribosomal subunit. Contacts protein L20.

This protein binds to 23S rRNA in the presence of protein L20. This chain is Large ribosomal subunit protein bL21, found in Synechococcus sp. (strain RCC307).